The following is a 689-amino-acid chain: Centrosomal protein of 78 kDa (689 aa).

Phosphoserine occurs at positions 325 and 327. Disordered regions lie at residues 432–451 (SSEV…VPEK), 563–589 (PQMT…EPKQ), and 614–689 (DSFP…TESH). Positions 450 to 505 (EKTSIEQEALQEKLEECLKQLKEERVIRLKVDKRVSELEHENAQLRNINFSLSEAL) form a coiled coil. Composition is skewed to basic and acidic residues over residues 573-587 (PKEE…KPEP) and 666-689 (QRKE…TESH).

It belongs to the CEP78 family. In terms of assembly, interacts with PLK4. Interacts with FAM161A. Interacts with IFT20; regulating IFT20 stability and localization. Interacts with TTC21A; regulating TTC21A stability and localization. Interacts with USP16; promoting USP16-dependent deubiquitination of tektins. Interacts with DCAF1/VPRBP; promoting localization of the EDVP complex to centrosomes. Interacts with CEP350; promoting CEP78 localization to centrosome and centriole. Widely expressed. Expressed in different retinal cell types with higher expression in cone compared to rod cells (at protein level).

It is found in the cytoplasm. Its subcellular location is the cytoskeleton. The protein localises to the microtubule organizing center. It localises to the centrosome. The protein resides in the centriole. It is found in the cilium basal body. In terms of biological role, centriole wall protein that localizes to mature centrioles and regulates centriole and cilia biogenesis. Involved in centrosome duplication: required for efficient PLK4 centrosomal localization and PLK4-induced overduplication of centrioles. Involved in cilium biogenesis and controls cilium length. Acts as a regulator of protein stability by preventing ubiquitination of centrosomal proteins, such as CCP110 and tektins. Associates with the EDVP complex, preventing ubiquitination and degradation of CCP110. Promotes deubiquitination of tektin proteins (TEKT1, TEKT2, TEK3, TEKT4 and TEKT5) via its interaction with USP16. The protein is Centrosomal protein of 78 kDa of Homo sapiens (Human).